We begin with the raw amino-acid sequence, 92 residues long: Protein RnfH (92 aa).

The protein belongs to the UPF0125 (RnfH) family.

This chain is Protein RnfH, found in Neisseria gonorrhoeae (strain NCCP11945).